The following is a 276-amino-acid chain: Shikimate dehydrogenase (NADP(+)) (276 aa).

Residues 19-21 and threonine 66 contribute to the shikimate site; that span reads SKS. Lysine 70 (proton acceptor) is an active-site residue. Aspartate 82 is an NADP(+) binding site. Residues asparagine 91 and aspartate 107 each coordinate shikimate. Residues 133 to 137, 157 to 162, and leucine 222 contribute to the NADP(+) site; these read GAGGA and NRTRSR. Tyrosine 224 lines the shikimate pocket. Glycine 245 lines the NADP(+) pocket.

Belongs to the shikimate dehydrogenase family. As to quaternary structure, homodimer.

The enzyme catalyses shikimate + NADP(+) = 3-dehydroshikimate + NADPH + H(+). It participates in metabolic intermediate biosynthesis; chorismate biosynthesis; chorismate from D-erythrose 4-phosphate and phosphoenolpyruvate: step 4/7. Functionally, involved in the biosynthesis of the chorismate, which leads to the biosynthesis of aromatic amino acids. Catalyzes the reversible NADPH linked reduction of 3-dehydroshikimate (DHSA) to yield shikimate (SA). This chain is Shikimate dehydrogenase (NADP(+)), found in Ruegeria sp. (strain TM1040) (Silicibacter sp.).